The following is a 395-amino-acid chain: Receptor-like cytoplasmic kinase 176 (395 aa).

Residues 1–45 are disordered; that stretch reads MGNCWGAKISSESPCRSASSPSGGTSKYASNSSVSAASVPPTPRS. Low complexity-rich tracts occupy residues 10–22 and 29–39; these read SSES…SSPS and ASNSSVSAASV. Residues 70–355 enclose the Protein kinase domain; the sequence is FRPDSVLGEG…EQVVAVLEQL (286 aa). ATP is bound by residues 76 to 84 and K108; that span reads LGEGGFGSV. D205 (proton acceptor) is an active-site residue. A disordered region spans residues 359-395; that stretch reads KETGANPQLQKKSSSKNAGSNGSKPSSKGKPANARLV. Low complexity predominate over residues 369–395; the sequence is KKSSSKNAGSNGSKPSSKGKPANARLV.

The protein belongs to the protein kinase superfamily. Ser/Thr protein kinase family. In terms of assembly, interacts with CERK1.

The catalysed reaction is L-seryl-[protein] + ATP = O-phospho-L-seryl-[protein] + ADP + H(+). It carries out the reaction L-threonyl-[protein] + ATP = O-phospho-L-threonyl-[protein] + ADP + H(+). In terms of biological role, functions downstream of CERK1 in the microbial peptidoglycans (PGNs) and fungal chitin signaling pathways that mediate innate immunity. Participates in the activation of defense genes during response to PGN and chitin. The protein is Receptor-like cytoplasmic kinase 176 of Oryza sativa subsp. japonica (Rice).